The sequence spans 164 residues: Ribosomal RNA large subunit methyltransferase H (164 aa).

Glycine 109 is an S-adenosyl-L-methionine binding site.

The protein belongs to the RNA methyltransferase RlmH family. In terms of assembly, homodimer.

It is found in the cytoplasm. The enzyme catalyses pseudouridine(1915) in 23S rRNA + S-adenosyl-L-methionine = N(3)-methylpseudouridine(1915) in 23S rRNA + S-adenosyl-L-homocysteine + H(+). Its function is as follows. Specifically methylates the pseudouridine at position 1915 (m3Psi1915) in 23S rRNA. This is Ribosomal RNA large subunit methyltransferase H from Methylobacterium radiotolerans (strain ATCC 27329 / DSM 1819 / JCM 2831 / NBRC 15690 / NCIMB 10815 / 0-1).